Reading from the N-terminus, the 495-residue chain is ATP synthase subunit beta (495 aa).

ATP is bound at residue 178–185 (GGAGVGKT).

It belongs to the ATPase alpha/beta chains family. In terms of assembly, F-type ATPases have 2 components, CF(1) - the catalytic core - and CF(0) - the membrane proton channel. CF(1) has five subunits: alpha(3), beta(3), gamma(1), delta(1), epsilon(1). CF(0) has three main subunits: a(1), b(2) and c(9-12). The alpha and beta chains form an alternating ring which encloses part of the gamma chain. CF(1) is attached to CF(0) by a central stalk formed by the gamma and epsilon chains, while a peripheral stalk is formed by the delta and b chains.

The protein localises to the cell membrane. The enzyme catalyses ATP + H2O + 4 H(+)(in) = ADP + phosphate + 5 H(+)(out). In terms of biological role, produces ATP from ADP in the presence of a proton gradient across the membrane. The catalytic sites are hosted primarily by the beta subunits. This chain is ATP synthase subunit beta, found in Bifidobacterium animalis subsp. lactis (strain AD011).